The chain runs to 388 residues: T-cell surface glycoprotein CD1e, membrane-associated (388 aa).

A signal peptide spans 1–19; that stretch reads MLLLFLLFEGLCCPGENTA. A propeptide spans 20–31 (removed in sCD1e); the sequence is APQALQSYHLAA. N-linked (GlcNAc...) asparagine glycans are attached at residues N47 and N84. One can recognise an Ig-like domain in the interval 191 to 301; the sequence is PRFLAGLMEA…LGGHDLIIHW (111 aa). A disulfide bond links C230 and C285. Residues 305–325 form a helical membrane-spanning segment; that stretch reads SIFLILICLTVIVTLVILVVV.

As to quaternary structure, heterodimer with B2M (beta-2-microglobulin). The association with B2M appears to be facilitated by the presence of the propeptide. Post-translationally, mono-ubiquitinated. Proteolytically cleaved in late endosomes to yield a soluble form. In terms of tissue distribution, expressed on cortical thymocytes, dendritic cells, Langerhans cells, on certain T-cell leukemias, and in various other tissues.

The protein resides in the golgi apparatus membrane. The protein localises to the early endosome. It localises to the late endosome. Its subcellular location is the lysosome lumen. Functionally, T-cell surface glycoprotein CD1e, soluble binds diacetylated lipids, including phosphatidyl inositides and diacylated sulfoglycolipids, and is required for the presentation of glycolipid antigens on the cell surface. The membrane-associated form is not active. The protein is T-cell surface glycoprotein CD1e, membrane-associated (CD1E) of Homo sapiens (Human).